We begin with the raw amino-acid sequence, 78 residues long: uncharacterized protein (78 aa).

The disordered stretch occupies residues 1–78; sequence MSSNSNTDHS…VDLEGPKDEQ (78 aa). Composition is skewed to basic and acidic residues over residues 10 to 33 and 63 to 78; these read STGD…ETES and LNLK…KDEQ.

This is an uncharacterized protein from Schizosaccharomyces pombe (strain 972 / ATCC 24843) (Fission yeast).